Consider the following 502-residue polypeptide: Probable cytosol aminopeptidase (502 aa).

Residues Lys267 and Asp272 each coordinate Mn(2+). Lys279 is a catalytic residue. Asp290, Asp349, and Glu351 together coordinate Mn(2+). Arg353 is an active-site residue.

This sequence belongs to the peptidase M17 family. Mn(2+) is required as a cofactor.

The protein resides in the cytoplasm. It carries out the reaction Release of an N-terminal amino acid, Xaa-|-Yaa-, in which Xaa is preferably Leu, but may be other amino acids including Pro although not Arg or Lys, and Yaa may be Pro. Amino acid amides and methyl esters are also readily hydrolyzed, but rates on arylamides are exceedingly low.. The catalysed reaction is Release of an N-terminal amino acid, preferentially leucine, but not glutamic or aspartic acids.. In terms of biological role, presumably involved in the processing and regular turnover of intracellular proteins. Catalyzes the removal of unsubstituted N-terminal amino acids from various peptides. This Aeromonas salmonicida (strain A449) protein is Probable cytosol aminopeptidase.